The sequence spans 71 residues: Large ribosomal subunit protein bL28 (71 aa).

Belongs to the bacterial ribosomal protein bL28 family.

This chain is Large ribosomal subunit protein bL28, found in Finegoldia magna (strain ATCC 29328 / DSM 20472 / WAL 2508) (Peptostreptococcus magnus).